A 510-amino-acid chain; its full sequence is Xylose import ATP-binding protein XylG (510 aa).

ABC transporter domains are found at residues 5–242 (LEMK…VGRE) and 259–505 (LRVE…LRSE). Residue 37 to 44 (GENGSGKS) coordinates ATP.

It belongs to the ABC transporter superfamily. Xylose importer (TC 3.A.1.2.4) family. As to quaternary structure, the complex is composed of two ATP-binding proteins (XylG), two transmembrane proteins (XylH) and a solute-binding protein (XylF).

The protein localises to the cell inner membrane. The catalysed reaction is D-xylose(out) + ATP + H2O = D-xylose(in) + ADP + phosphate + H(+). Functionally, part of the ABC transporter complex XylFGH involved in xylose import. Responsible for energy coupling to the transport system. The protein is Xylose import ATP-binding protein XylG of Yersinia pestis.